Here is a 166-residue protein sequence, read N- to C-terminus: Thioredoxin, mitochondrial (166 aa).

The N-terminal 59 residues, 1 to 59 (MAQRLLLGRFLTSVISRKPPQGVWASLTSKTLQTPQYNAGGLTVMPSPARTVHTTRVCL), are a transit peptide targeting the mitochondrion. A Thioredoxin domain is found at 61-166 (TFNVQDGPDF…LEAFLKKLIG (106 aa)). Residues Cys90 and Cys93 each act as nucleophile in the active site. Cys90 and Cys93 are disulfide-bonded. The residue at position 152 (Lys152) is an N6-acetyllysine; alternate. An N6-succinyllysine; alternate modification is found at Lys152.

This sequence belongs to the thioredoxin family. As to quaternary structure, monomer.

Its subcellular location is the mitochondrion. In terms of biological role, important for the control of mitochondrial reactive oxygen species homeostasis, apoptosis regulation and cell viability. Is involved in various redox reactions including the reduction of protein disulfide bonds, through the reversible oxidation of its active center dithiol to a disulfide. The sequence is that of Thioredoxin, mitochondrial (Txn2) from Mus musculus (Mouse).